Here is a 438-residue protein sequence, read N- to C-terminus: Adenylosuccinate synthetase (438 aa).

Residues 13 to 19 (GDEGKGK) and 41 to 43 (GHT) each bind GTP. Asp-14 functions as the Proton acceptor in the catalytic mechanism. Mg(2+)-binding residues include Asp-14 and Gly-41. IMP-binding positions include 14-17 (DEGK), 39-42 (NAGH), Thr-130, Arg-144, Gln-225, Thr-240, and Arg-310. His-42 functions as the Proton donor in the catalytic mechanism. A substrate-binding site is contributed by 306 to 312 (ATTGRLR). Residues Arg-312, 338-340 (KLD), and 421-423 (STG) each bind GTP.

The protein belongs to the adenylosuccinate synthetase family. Homodimer. The cofactor is Mg(2+).

It localises to the cytoplasm. It catalyses the reaction IMP + L-aspartate + GTP = N(6)-(1,2-dicarboxyethyl)-AMP + GDP + phosphate + 2 H(+). The protein operates within purine metabolism; AMP biosynthesis via de novo pathway; AMP from IMP: step 1/2. Plays an important role in the de novo pathway of purine nucleotide biosynthesis. Catalyzes the first committed step in the biosynthesis of AMP from IMP. This chain is Adenylosuccinate synthetase, found in Aliivibrio fischeri (strain ATCC 700601 / ES114) (Vibrio fischeri).